The sequence spans 930 residues: Isoleucine--tRNA ligase (930 aa).

The short motif at 57 to 67 (PYANGNIHVGH) is the 'HIGH' region element. An L-isoleucyl-5'-AMP-binding site is contributed by Glu-554. A 'KMSKS' region motif is present at residues 595 to 599 (KMSKS). Lys-598 provides a ligand contact to ATP. Zn(2+) contacts are provided by Cys-888, Cys-891, Cys-908, and Cys-911.

It belongs to the class-I aminoacyl-tRNA synthetase family. IleS type 1 subfamily. In terms of assembly, monomer. Requires Zn(2+) as cofactor.

It localises to the cytoplasm. The catalysed reaction is tRNA(Ile) + L-isoleucine + ATP = L-isoleucyl-tRNA(Ile) + AMP + diphosphate. Catalyzes the attachment of isoleucine to tRNA(Ile). As IleRS can inadvertently accommodate and process structurally similar amino acids such as valine, to avoid such errors it has two additional distinct tRNA(Ile)-dependent editing activities. One activity is designated as 'pretransfer' editing and involves the hydrolysis of activated Val-AMP. The other activity is designated 'posttransfer' editing and involves deacylation of mischarged Val-tRNA(Ile). In Streptococcus pneumoniae (strain JJA), this protein is Isoleucine--tRNA ligase.